Consider the following 344-residue polypeptide: Methionine import ATP-binding protein MetN (344 aa).

Positions 2–241 constitute an ABC transporter domain; sequence IEIKSVNKVF…PKTELAHQFI (240 aa). ATP is bound at residue 38–45; that stretch reads GSSGAGKS.

It belongs to the ABC transporter superfamily. Methionine importer (TC 3.A.1.24) family. The complex is composed of two ATP-binding proteins (MetN), two transmembrane proteins (MetI) and a solute-binding protein (MetQ).

The protein localises to the cell inner membrane. The catalysed reaction is L-methionine(out) + ATP + H2O = L-methionine(in) + ADP + phosphate + H(+). It catalyses the reaction D-methionine(out) + ATP + H2O = D-methionine(in) + ADP + phosphate + H(+). Its function is as follows. Part of the ABC transporter complex MetNIQ involved in methionine import. Responsible for energy coupling to the transport system. The protein is Methionine import ATP-binding protein MetN of Vibrio cholerae serotype O1 (strain ATCC 39315 / El Tor Inaba N16961).